The chain runs to 326 residues: Protein-ribulosamine 3-kinase, chloroplastic (326 aa).

Residues 1–30 constitute a chloroplast transit peptide; the sequence is MAVASLSICFSARPHLLLRNFSPRPKFVAM. An ATP-binding site is contributed by 125 to 127; it reads EFI. Aspartate 230 acts as the Proton acceptor in catalysis.

Belongs to the fructosamine kinase family.

It localises to the plastid. The protein localises to the chloroplast. The catalysed reaction is N(6)-D-ribulosyl-L-lysyl-[protein] + ATP = N(6)-(3-O-phospho-D-ribulosyl)-L-lysyl-[protein] + ADP + H(+). It catalyses the reaction N(6)-(D-erythrulosyl)-L-lysyl-[protein] + ATP = N(6)-(3-O-phospho-D-erythrulosyl)-L-lysyl-[protein] + ADP + H(+). In terms of biological role, initiates a process leading to the deglycation of proteins. Phosphorylates low-molecular-mass and protein-bound erythrulosamines and ribulosamines, but not fructosamines or psicosamines, on the third carbon of the sugar moiety. Protein-bound erythrulosamine 3-phosphates and ribulosamine 3-phosphates are unstable and decompose under physiological conditions. This chain is Protein-ribulosamine 3-kinase, chloroplastic, found in Arabidopsis thaliana (Mouse-ear cress).